Consider the following 564-residue polypeptide: Ell-associated factor Eaf (564 aa).

2 disordered regions span residues 179–255 (SGPG…MITD) and 270–564 (QANI…DDDD). The span at 186–205 (ENSTMRVSSKTKVSTGSRRN) shows a compositional bias: polar residues. S215 is modified (phosphoserine). Positions 274–283 (SGSSTGSSSG) are enriched in low complexity. A compositionally biased stretch (basic residues) spans 297 to 309 (GKQRQAHGKRQQI). Low complexity-rich tracts occupy residues 315–329 (PPVQ…QQQP), 343–387 (QQQQ…QQRP), and 409–420 (ASQSVAQAAAVL). Residues 438–453 (DSSDSDSGSDSDDSTE) show a composition bias toward acidic residues. 3 stretches are compositionally biased toward low complexity: residues 463–505 (EQQQ…NQLP), 523–533 (QQPQPQPQQQQ), and 546–564 (NDLL…DDDD).

This sequence belongs to the EAF family.

The protein resides in the nucleus. In terms of biological role, promotes transcriptional elongation by Su(Tpl)/ELL. Essential for development. The polypeptide is Ell-associated factor Eaf (Drosophila pseudoobscura pseudoobscura (Fruit fly)).